A 426-amino-acid polypeptide reads, in one-letter code: Histidine--tRNA ligase (426 aa).

This sequence belongs to the class-II aminoacyl-tRNA synthetase family. In terms of assembly, homodimer.

Its subcellular location is the cytoplasm. The catalysed reaction is tRNA(His) + L-histidine + ATP = L-histidyl-tRNA(His) + AMP + diphosphate + H(+). This is Histidine--tRNA ligase from Streptococcus agalactiae serotype Ia (strain ATCC 27591 / A909 / CDC SS700).